A 161-amino-acid chain; its full sequence is Small ribosomal subunit protein uS8m (161 aa).

It belongs to the universal ribosomal protein uS8 family. Component of the mitochondrial small ribosomal subunit (mt-SSU). Mature N.crassa 74S mitochondrial ribosomes consist of a small (37S) and a large (54S) subunit. The 37S small subunit contains a 16S ribosomal RNA (16S mt-rRNA) and 32 different proteins. The 54S large subunit contains a 23S rRNA (23S mt-rRNA) and 42 different proteins.

The protein localises to the mitochondrion. Functionally, component of the mitochondrial ribosome (mitoribosome), a dedicated translation machinery responsible for the synthesis of mitochondrial genome-encoded proteins, including at least some of the essential transmembrane subunits of the mitochondrial respiratory chain. The mitoribosomes are attached to the mitochondrial inner membrane and translation products are cotranslationally integrated into the membrane. The polypeptide is Small ribosomal subunit protein uS8m (mrps8) (Neurospora crassa (strain ATCC 24698 / 74-OR23-1A / CBS 708.71 / DSM 1257 / FGSC 987)).